Reading from the N-terminus, the 460-residue chain is Elongation factor 1-alpha-B (460 aa).

G2 bears the N,N,N-trimethylglycine mark. Position 3 is an N6,N6-dimethyllysine; alternate (K3). At K3 the chain carries N6-methyllysine; alternate. Residues 5–240 form the tr-type G domain; sequence KGHINVVVIG…DSIEPPARPT (236 aa). The tract at residues 14-21 is G1; it reads GHVDSGKS. 14–21 serves as a coordination point for GTP; it reads GHVDSGKS. N6-methyllysine is present on K30. Residues 70–74 form a G2 region; it reads GITID. Position 79 is an N6,N6,N6-trimethyllysine (K79). Residues 91–94 form a G3 region; that stretch reads DAPG. GTP contacts are provided by residues 91–95 and 153–156; these read DAPGH and NKMD. Residues 153–156 are G4; it reads NKMD. The tract at residues 192–194 is G5; sequence SGF. K316 carries the post-translational modification N6,N6-dimethyllysine; alternate. An N6-methyllysine; alternate modification is found at K316. The residue at position 390 (K390) is an N6-methyllysine.

It belongs to the TRAFAC class translation factor GTPase superfamily. Classic translation factor GTPase family. EF-Tu/EF-1A subfamily.

It localises to the cytoplasm. Functionally, this protein promotes the GTP-dependent binding of aminoacyl-tRNA to the A-site of ribosomes during protein biosynthesis. The protein is Elongation factor 1-alpha-B (tef102) of Schizosaccharomyces pombe (strain 972 / ATCC 24843) (Fission yeast).